Here is a 382-residue protein sequence, read N- to C-terminus: Succinate--CoA ligase [ADP-forming] subunit beta (382 aa).

The ATP-grasp domain occupies 9 to 240 (KELFLRYGVK…PRDITEFEAY (232 aa)). ATP contacts are provided by residues Lys-45, 52–54 (GRG), Val-94, and Glu-99. The Mg(2+) site is built by Asn-193 and Asp-207. Residues Asn-260 and 317–319 (GIT) contribute to the substrate site.

This sequence belongs to the succinate/malate CoA ligase beta subunit family. As to quaternary structure, heterotetramer of two alpha and two beta subunits. Mg(2+) serves as cofactor.

It carries out the reaction succinate + ATP + CoA = succinyl-CoA + ADP + phosphate. It catalyses the reaction GTP + succinate + CoA = succinyl-CoA + GDP + phosphate. The protein operates within carbohydrate metabolism; tricarboxylic acid cycle; succinate from succinyl-CoA (ligase route): step 1/1. Succinyl-CoA synthetase functions in the citric acid cycle (TCA), coupling the hydrolysis of succinyl-CoA to the synthesis of either ATP or GTP and thus represents the only step of substrate-level phosphorylation in the TCA. The beta subunit provides nucleotide specificity of the enzyme and binds the substrate succinate, while the binding sites for coenzyme A and phosphate are found in the alpha subunit. The protein is Succinate--CoA ligase [ADP-forming] subunit beta of Pyrobaculum islandicum (strain DSM 4184 / JCM 9189 / GEO3).